Consider the following 377-residue polypeptide: UPF0754 membrane protein BPUM_0927 (377 aa).

A run of 2 helical transmembrane segments spans residues 1–21 and 357–377; these read MNIFTTFLFMIVIGAVIGAAT and FLGGFLGGLIGAIQAIFVTLF.

The protein belongs to the UPF0754 family.

It localises to the cell membrane. The polypeptide is UPF0754 membrane protein BPUM_0927 (Bacillus pumilus (strain SAFR-032)).